An 837-amino-acid polypeptide reads, in one-letter code: GRIP1-associated protein 1 (837 aa).

Ala-2 is subject to N-acetylalanine. A coiled-coil region spans residues 4-158 (ALSEEEFQRM…ALQERYGKEA (155 aa)). 4 disordered regions span residues 161-180 (PSAVSEGQGDPPGDVLPISL), 555-577 (KGKEEELQNVRDQLQQAQEERDG), 647-666 (SEMNSPSRTQTGDSSSVSSF), and 677-702 (SSAIPARSLSSSPQAQPPRPAELSDE). The stretch at 204 to 637 (EQLQGLESSK…LQEILTNSKS (434 aa)) forms a coiled coil. Residues 648 to 666 (EMNSPSRTQTGDSSSVSSF) are compositionally biased toward polar residues. Residues Ser-651, Ser-662, Ser-664, Ser-665, Ser-684, Ser-686, Ser-687, and Ser-688 each carry the phosphoserine modification. Positions 678–690 (SAIPARSLSSSPQ) are enriched in low complexity. Coiled-coil stretches lie at residues 697-731 (AELSDEEVAELFQRLAETQQEKWMLEEKVKHLEVS) and 781-810 (DENLREMNKKLQNMLEEQLTKNMHLHKDME). Ser-826 carries the post-translational modification Phosphoserine.

As to quaternary structure, interacts with GRIP1, GRIP2 and AMPA receptors. Interacts (via C-terminus) with MAPK8/JNK1 and with MAP3K1/MEKK1; the interaction promotes MAP3K1-mediated phosphorylation of MAPK8. Interacts (via N-terminus) with RAB4A (in GTP-bound form). Interacts (via C-terminus) with STX12. Proteolytically cleaved by caspase-3. A minor C-terminal proteolytic fragment of 30 kDa is produced. Proteolytic cleavage is required for JNK signaling activation. In terms of tissue distribution, expressed in the central nervous system; especially in neurons.

The protein resides in the early endosome membrane. Its subcellular location is the recycling endosome membrane. It is found in the cell projection. The protein localises to the axon. It localises to the dendrite. The protein resides in the synapse. Regulates the endosomal recycling back to the neuronal plasma membrane, possibly by connecting early and late recycling endosomal domains and promoting segregation of recycling endosomes from early endosomal membranes. Involved in the localization of recycling endosomes to dendritic spines, thereby playing a role in the maintenance of dendritic spine morphology. Required for the activity-induced AMPA receptor recycling to dendrite membranes and for long-term potentiation and synaptic plasticity. In terms of biological role, functions as a scaffold protein in neurons to facilitate MAP3K1/MEKK1-mediated activation of the JNK1 kinase by phosphorylation, possibly by bringing MAP3K1/MEKK1 and JNK1 in close proximity. The sequence is that of GRIP1-associated protein 1 (Gripap1) from Rattus norvegicus (Rat).